We begin with the raw amino-acid sequence, 378 residues long: Phosphoglycerate kinase (378 aa).

(2R)-3-phosphoglycerate-binding residues include valine 1, aspartate 2, phenylalanine 3, asparagine 4, asparagine 16, arginine 17, serine 40, histidine 41, glycine 43, arginine 44, leucine 99, arginine 100, histidine 147, and arginine 148. Position 191 (glycine 191) interacts with ADP. Glycine 191 contacts CDP. Alanine 192 and lysine 193 together coordinate AMP. Alanine 192 is an ATP binding site. Residue alanine 192 participates in Mg(2+) binding. Aspartate 196 contributes to the CDP binding site. Position 196 (aspartate 196) interacts with Mg(2+). Lysine 197 is a binding site for AMP. Lysine 197 provides a ligand contact to ATP. ADP is bound at residue glycine 215. Glycine 215 is a binding site for CDP. Residues glycine 216 and glycine 288 each coordinate AMP. Residues glycine 216 and glycine 288 each coordinate ATP. CDP-binding residues include glycine 313 and phenylalanine 318. Phenylalanine 318 contributes to the ADP binding site. Glutamate 319 is a binding site for AMP. ATP-binding residues include glutamate 319, aspartate 351, and threonine 352. Aspartate 351 is a binding site for Mg(2+).

This sequence belongs to the phosphoglycerate kinase family. As to quaternary structure, monomer. Mg(2+) serves as cofactor.

It catalyses the reaction (2R)-3-phosphoglycerate + ATP = (2R)-3-phospho-glyceroyl phosphate + ADP. The protein operates within carbohydrate degradation; glycolysis; pyruvate from D-glyceraldehyde 3-phosphate: step 2/5. This Condylostoma magnum protein is Phosphoglycerate kinase (PGK).